Here is a 77-residue protein sequence, read N- to C-terminus: Acyl carrier protein (77 aa).

The Carrier domain occupies S2–S77. At S37 the chain carries O-(pantetheine 4'-phosphoryl)serine.

This sequence belongs to the acyl carrier protein (ACP) family. 4'-phosphopantetheine is transferred from CoA to a specific serine of apo-ACP by AcpS. This modification is essential for activity because fatty acids are bound in thioester linkage to the sulfhydryl of the prosthetic group.

The protein localises to the cytoplasm. It participates in lipid metabolism; fatty acid biosynthesis. Its function is as follows. Carrier of the growing fatty acid chain in fatty acid biosynthesis. The sequence is that of Acyl carrier protein from Alcanivorax borkumensis (strain ATCC 700651 / DSM 11573 / NCIMB 13689 / SK2).